An 89-amino-acid polypeptide reads, in one-letter code: Small ribosomal subunit protein uS15 (89 aa).

The protein belongs to the universal ribosomal protein uS15 family. In terms of assembly, part of the 30S ribosomal subunit. Forms a bridge to the 50S subunit in the 70S ribosome, contacting the 23S rRNA.

Its function is as follows. One of the primary rRNA binding proteins, it binds directly to 16S rRNA where it helps nucleate assembly of the platform of the 30S subunit by binding and bridging several RNA helices of the 16S rRNA. Functionally, forms an intersubunit bridge (bridge B4) with the 23S rRNA of the 50S subunit in the ribosome. The chain is Small ribosomal subunit protein uS15 from Crocosphaera subtropica (strain ATCC 51142 / BH68) (Cyanothece sp. (strain ATCC 51142)).